A 205-amino-acid polypeptide reads, in one-letter code: Adenylyl-sulfate kinase (205 aa).

31–38 contacts ATP; the sequence is GLSGAGKS. Ser-105 (phosphoserine intermediate) is an active-site residue.

This sequence belongs to the APS kinase family.

It carries out the reaction adenosine 5'-phosphosulfate + ATP = 3'-phosphoadenylyl sulfate + ADP + H(+). It functions in the pathway sulfur metabolism; hydrogen sulfide biosynthesis; sulfite from sulfate: step 2/3. Functionally, catalyzes the synthesis of activated sulfate. The sequence is that of Adenylyl-sulfate kinase from Shewanella sp. (strain ANA-3).